The chain runs to 429 residues: Hydrogenobyrinate a,c-diamide synthase (429 aa).

Positions 240-429 (RTAVARDVAF…SFMHLIDFSE (190 aa)) constitute a GATase cobBQ-type domain. Residue Cys-323 is the Nucleophile of the active site.

It belongs to the CobB/CbiA family. It depends on Mg(2+) as a cofactor.

It catalyses the reaction hydrogenobyrinate + 2 L-glutamine + 2 ATP + 2 H2O = hydrogenobyrinate a,c-diamide + 2 L-glutamate + 2 ADP + 2 phosphate + 2 H(+). Its pathway is cofactor biosynthesis; adenosylcobalamin biosynthesis; cob(II)yrinate a,c-diamide from precorrin-2 (aerobic route): step 9/10. In terms of biological role, catalyzes the ATP-dependent amidation of the two carboxylate groups at positions a and c of hydrogenobyrinate, using either L-glutamine or ammonia as the nitrogen source. The polypeptide is Hydrogenobyrinate a,c-diamide synthase (Rhizobium meliloti (strain 1021) (Ensifer meliloti)).